The following is a 387-amino-acid chain: Sorting nexin-7 (387 aa).

The PX domain occupies 30–151; the sequence is KDLFITVDEP…IFLTAQAWEL (122 aa). Residues Arg73, Gln75, Lys103, and Arg117 each contribute to the a 1,2-diacyl-sn-glycero-3-phospho-(1D-myo-inositol-3-phosphate) site. The region spanning 178 to 387 is the BAR domain; sequence GVKNRPEEFM…HLEEASEDKP (210 aa).

This sequence belongs to the sorting nexin family. As to quaternary structure, heterodimer; heterodimerizes with SNX4.

The protein localises to the early endosome membrane. Involved in the regulation of endocytosis and in several stages of intracellular trafficking. Together with SNX4, involved in autophagosome assembly by regulating trafficking and recycling of phospholipid scramblase ATG9A. The polypeptide is Sorting nexin-7 (Homo sapiens (Human)).